The primary structure comprises 623 residues: tRNA 5-methylaminomethyl-2-thiouridine biosynthesis bifunctional protein MnmC (623 aa).

The tract at residues 1-244 (MCVSSSIQTA…KREMLKAIWP (244 aa)) is tRNA (mnm(5)s(2)U34)-methyltransferase. Residues 268–623 (IGAGIAGLHC…VKIKKPYYSS (356 aa)) are FAD-dependent cmnm(5)s(2)U34 oxidoreductase.

It in the N-terminal section; belongs to the methyltransferase superfamily. tRNA (mnm(5)s(2)U34)-methyltransferase family. The protein in the C-terminal section; belongs to the DAO family. FAD is required as a cofactor.

It localises to the cytoplasm. It catalyses the reaction 5-aminomethyl-2-thiouridine(34) in tRNA + S-adenosyl-L-methionine = 5-methylaminomethyl-2-thiouridine(34) in tRNA + S-adenosyl-L-homocysteine + H(+). Its function is as follows. Catalyzes the last two steps in the biosynthesis of 5-methylaminomethyl-2-thiouridine (mnm(5)s(2)U) at the wobble position (U34) in tRNA. Catalyzes the FAD-dependent demodification of cmnm(5)s(2)U34 to nm(5)s(2)U34, followed by the transfer of a methyl group from S-adenosyl-L-methionine to nm(5)s(2)U34, to form mnm(5)s(2)U34. This Acinetobacter baylyi (strain ATCC 33305 / BD413 / ADP1) protein is tRNA 5-methylaminomethyl-2-thiouridine biosynthesis bifunctional protein MnmC.